We begin with the raw amino-acid sequence, 565 residues long: Glycine--tRNA ligase (565 aa).

2 residues coordinate substrate: R98 and E164. ATP is bound by residues 196 to 198 (RNE), 206 to 211 (IRLREF), 323 to 324 (EI), and 440 to 443 (GIDR). A substrate-binding site is contributed by 211–215 (FTQAE). 436 to 440 (EPSFG) lines the substrate pocket.

The protein belongs to the class-II aminoacyl-tRNA synthetase family.

The protein resides in the cytoplasm. It catalyses the reaction tRNA(Gly) + glycine + ATP = glycyl-tRNA(Gly) + AMP + diphosphate. Its function is as follows. Catalyzes the attachment of glycine to tRNA(Gly). This Methanothermobacter thermautotrophicus (strain ATCC 29096 / DSM 1053 / JCM 10044 / NBRC 100330 / Delta H) (Methanobacterium thermoautotrophicum) protein is Glycine--tRNA ligase.